A 428-amino-acid polypeptide reads, in one-letter code: Lysophosphatidic acid phosphatase type 6 (428 aa).

The N-terminal 32 residues, 1 to 32 (MITGVFSMRLWTPVGVLTSLAYCLHQRRVALA), are a transit peptide targeting the mitochondrion. Positions 58–168 (RHGARSPRKP…VFIRSTNIFR (111 aa)) are substrate binding. H59 (nucleophile) is an active-site residue. The Proton donor role is filled by D335.

This sequence belongs to the histidine acid phosphatase family. As to quaternary structure, monomer.

It localises to the mitochondrion. It carries out the reaction a phosphate monoester + H2O = an alcohol + phosphate. It catalyses the reaction 1-(9Z-octadecenoyl)-sn-glycero-3-phosphate + H2O = 1-(9Z-octadecenoyl)-sn-glycerol + phosphate. Functionally, hydrolyzes lysophosphatidic acid (LPA) containing a medium length fatty acid chain to the corresponding monoacylglycerol. Has highest activity with lysophosphatidic acid containing myristate (C14:0), monounsaturated oleate (C18:1) or palmitate (C16:0), and lower activity with C18:0 and C6:0 lysophosphatidic acid. This chain is Lysophosphatidic acid phosphatase type 6 (ACP6), found in Pongo abelii (Sumatran orangutan).